The primary structure comprises 77 residues: Large ribosomal subunit protein uL29 (77 aa).

This sequence belongs to the universal ribosomal protein uL29 family.

The chain is Large ribosomal subunit protein uL29 from Mycobacterium avium (strain 104).